A 115-amino-acid polypeptide reads, in one-letter code: Photosystem II reaction center Psb28 protein (115 aa).

It belongs to the Psb28 family. As to quaternary structure, part of the photosystem II complex.

The protein localises to the plastid. It is found in the chloroplast thylakoid membrane. The sequence is that of Photosystem II reaction center Psb28 protein from Phaeodactylum tricornutum (strain CCAP 1055/1).